The chain runs to 455 residues: Retinoic acid receptor beta (455 aa).

Positions 1–87 (MTTSSRTCPV…PLPPPRVYKP (87 aa)) are modulating. A disordered region spans residues 45 to 78 (QSHPPTSGCSTPSPASVETQSTSSEELVPSPPSP). Over residues 47-66 (HPPTSGCSTPSPASVETQST) the composition is skewed to polar residues. 2 consecutive NR C4-type zinc fingers follow at residues 88 to 108 (CFVCQDKSSGYHYGVSACEGC) and 124 to 148 (CHRDKNCVINKVTRNRCQYCRLQKC). The segment at residues 88 to 153 (CFVCQDKSSG…RLQKCFEVGM (66 aa)) is a DNA-binding region (nuclear receptor). Positions 154–182 (SKESVRNDRNKKKKEPTKQESTENYEMTA) are hinge. In terms of domain architecture, NR LBD spans 183-417 (ELDDLTEKIR…PLIQEMLENS (235 aa)). Positions 416–455 (NSEGHEPLTPTSNGNTAEHSPSISPSSVDNSSVSQSPMVQ) are disordered. Residues 424–434 (TPTSNGNTAEH) show a composition bias toward polar residues. Residues 435–455 (SPSISPSSVDNSSVSQSPMVQ) are compositionally biased toward low complexity.

This sequence belongs to the nuclear hormone receptor family. NR1 subfamily. In terms of assembly, heterodimer; with a RXR molecule. Binds DNA preferentially as a RAR/RXR heterodimer. As to expression, both isoforms expressed in heart, lung, kidney, liver, brain, lung and testis. Isoform Beta-1 is highly expressed in testes and brain. Levels increase during testes maturation. Isoform beta-2 is predominant in heart, kidney and lung.

The protein resides in the nucleus. In terms of biological role, receptor for retinoic acid. Retinoic acid receptors bind as heterodimers to their target response elements in response to their ligands, all-trans or 9-cis retinoic acid, and regulate gene expression in various biological processes. The RAR/RXR heterodimers bind to the retinoic acid response elements (RARE) composed of tandem 5'-AGGTCA-3' sites known as DR1-DR5. May be required for Sertoli cell differentiation and spermatogenesis. In Coturnix japonica (Japanese quail), this protein is Retinoic acid receptor beta (RARB).